The following is a 121-amino-acid chain: UPF0212 protein VNG_0879C (121 aa).

Belongs to the UPF0212 family.

The polypeptide is UPF0212 protein VNG_0879C (Halobacterium salinarum (strain ATCC 700922 / JCM 11081 / NRC-1) (Halobacterium halobium)).